The chain runs to 338 residues: MIEADRLIAPDNPVFKDEDVIDRAIRPKALADYQGQDHVRGQMEIFIKAAQMRNEALDHLLIFGPPGLGKTTLANIVANEMDVNIRTTSGPVLEKAGDLAALLTNLEENDVLFIDEIHRLSPVVEEVLYPAMEDYQLDIMIGEGPAARSIKIDLPPFTLIGATTRAGSLTSPLRDRFGITQRLEYYKVEDLQNIVQRSADCLGLSMESQGALEVARRARGTPRIANRLLRRVRDYAEVKGDGHICPEVADKALNMLDVDAKGFDYMDRKLLLAIMEKFGGGPVGIDNMAAAIGEERDTIEDVLEPYLIQQGYLQRTPRGRIATDRAYLHFGIDKPSNR.

A large ATPase domain (RuvB-L) region spans residues 4–186 (ADRLIAPDNP…FGITQRLEYY (183 aa)). Residues isoleucine 25, arginine 26, glycine 67, lysine 70, threonine 71, threonine 72, 133–135 (EDY), arginine 176, tyrosine 186, and arginine 223 each bind ATP. Threonine 71 lines the Mg(2+) pocket. A small ATPAse domain (RuvB-S) region spans residues 187–257 (KVEDLQNIVQ…VADKALNMLD (71 aa)). Positions 260–338 (AKGFDYMDRK…HFGIDKPSNR (79 aa)) are head domain (RuvB-H). Positions 296, 315, and 320 each coordinate DNA.

It belongs to the RuvB family. As to quaternary structure, homohexamer. Forms an RuvA(8)-RuvB(12)-Holliday junction (HJ) complex. HJ DNA is sandwiched between 2 RuvA tetramers; dsDNA enters through RuvA and exits via RuvB. An RuvB hexamer assembles on each DNA strand where it exits the tetramer. Each RuvB hexamer is contacted by two RuvA subunits (via domain III) on 2 adjacent RuvB subunits; this complex drives branch migration. In the full resolvosome a probable DNA-RuvA(4)-RuvB(12)-RuvC(2) complex forms which resolves the HJ.

It localises to the cytoplasm. It catalyses the reaction ATP + H2O = ADP + phosphate + H(+). Functionally, the RuvA-RuvB-RuvC complex processes Holliday junction (HJ) DNA during genetic recombination and DNA repair, while the RuvA-RuvB complex plays an important role in the rescue of blocked DNA replication forks via replication fork reversal (RFR). RuvA specifically binds to HJ cruciform DNA, conferring on it an open structure. The RuvB hexamer acts as an ATP-dependent pump, pulling dsDNA into and through the RuvAB complex. RuvB forms 2 homohexamers on either side of HJ DNA bound by 1 or 2 RuvA tetramers; 4 subunits per hexamer contact DNA at a time. Coordinated motions by a converter formed by DNA-disengaged RuvB subunits stimulates ATP hydrolysis and nucleotide exchange. Immobilization of the converter enables RuvB to convert the ATP-contained energy into a lever motion, pulling 2 nucleotides of DNA out of the RuvA tetramer per ATP hydrolyzed, thus driving DNA branch migration. The RuvB motors rotate together with the DNA substrate, which together with the progressing nucleotide cycle form the mechanistic basis for DNA recombination by continuous HJ branch migration. Branch migration allows RuvC to scan DNA until it finds its consensus sequence, where it cleaves and resolves cruciform DNA. This chain is Holliday junction branch migration complex subunit RuvB, found in Vibrio atlanticus (strain LGP32) (Vibrio splendidus (strain Mel32)).